The chain runs to 539 residues: Hydroxylamine reductase (539 aa).

Residues Cys-3, Cys-6, Cys-13, and Cys-19 each coordinate [4Fe-4S] cluster. Hybrid [4Fe-2O-2S] cluster is bound by residues His-240, Glu-264, Cys-308, Cys-395, Cys-423, Cys-448, Glu-482, and Lys-484. Cys-395 is subject to Cysteine persulfide.

This sequence belongs to the HCP family. It depends on [4Fe-4S] cluster as a cofactor. Hybrid [4Fe-2O-2S] cluster is required as a cofactor.

It is found in the cytoplasm. It catalyses the reaction A + NH4(+) + H2O = hydroxylamine + AH2 + H(+). In terms of biological role, catalyzes the reduction of hydroxylamine to form NH(3) and H(2)O. The sequence is that of Hydroxylamine reductase from Thermodesulfovibrio yellowstonii (strain ATCC 51303 / DSM 11347 / YP87).